The primary structure comprises 368 residues: Aminomethyltransferase (368 aa).

This sequence belongs to the GcvT family. The glycine cleavage system is composed of four proteins: P, T, L and H.

It catalyses the reaction N(6)-[(R)-S(8)-aminomethyldihydrolipoyl]-L-lysyl-[protein] + (6S)-5,6,7,8-tetrahydrofolate = N(6)-[(R)-dihydrolipoyl]-L-lysyl-[protein] + (6R)-5,10-methylene-5,6,7,8-tetrahydrofolate + NH4(+). In terms of biological role, the glycine cleavage system catalyzes the degradation of glycine. The sequence is that of Aminomethyltransferase from Thermoanaerobacter pseudethanolicus (strain ATCC 33223 / 39E) (Clostridium thermohydrosulfuricum).